The following is a 444-amino-acid chain: Ribulose bisphosphate carboxylase large chain (444 aa).

K5 is subject to N6,N6,N6-trimethyllysine. Positions 114 and 164 each coordinate substrate. The active-site Proton acceptor is K166. K168 contacts substrate. Residues K192, D194, and E195 each coordinate Mg(2+). K192 carries the N6-carboxylysine modification. H285 serves as the catalytic Proton acceptor. Substrate contacts are provided by R286, H318, and S370.

This sequence belongs to the RuBisCO large chain family. Type I subfamily. As to quaternary structure, heterohexadecamer of 8 large chains and 8 small chains; disulfide-linked. The disulfide link is formed within the large subunit homodimers. Mg(2+) serves as cofactor. The disulfide bond which can form in the large chain dimeric partners within the hexadecamer appears to be associated with oxidative stress and protein turnover.

Its subcellular location is the plastid. It is found in the chloroplast. It carries out the reaction 2 (2R)-3-phosphoglycerate + 2 H(+) = D-ribulose 1,5-bisphosphate + CO2 + H2O. It catalyses the reaction D-ribulose 1,5-bisphosphate + O2 = 2-phosphoglycolate + (2R)-3-phosphoglycerate + 2 H(+). Its function is as follows. RuBisCO catalyzes two reactions: the carboxylation of D-ribulose 1,5-bisphosphate, the primary event in carbon dioxide fixation, as well as the oxidative fragmentation of the pentose substrate in the photorespiration process. Both reactions occur simultaneously and in competition at the same active site. In Botrychium strictum (Fern), this protein is Ribulose bisphosphate carboxylase large chain.